Reading from the N-terminus, the 180-residue chain is Translation initiation factor IF-3 (180 aa).

Belongs to the IF-3 family. As to quaternary structure, monomer.

The protein resides in the cytoplasm. Functionally, IF-3 binds to the 30S ribosomal subunit and shifts the equilibrium between 70S ribosomes and their 50S and 30S subunits in favor of the free subunits, thus enhancing the availability of 30S subunits on which protein synthesis initiation begins. This chain is Translation initiation factor IF-3, found in Pasteurella multocida (strain Pm70).